A 513-amino-acid chain; its full sequence is 2-isopropylmalate synthase (513 aa).

The region spanning 5–267 (LVIFDTTLRD…ETRIDTTQIV (263 aa)) is the Pyruvate carboxyltransferase domain. Residues Asp14, His202, His204, and Asn238 each coordinate Mn(2+). The interval 393–513 (KLVYSRVCSE…LDKVKAQGGV (121 aa)) is regulatory domain.

This sequence belongs to the alpha-IPM synthase/homocitrate synthase family. LeuA type 1 subfamily. In terms of assembly, homodimer. The cofactor is Mn(2+).

Its subcellular location is the cytoplasm. The enzyme catalyses 3-methyl-2-oxobutanoate + acetyl-CoA + H2O = (2S)-2-isopropylmalate + CoA + H(+). Its pathway is amino-acid biosynthesis; L-leucine biosynthesis; L-leucine from 3-methyl-2-oxobutanoate: step 1/4. In terms of biological role, catalyzes the condensation of the acetyl group of acetyl-CoA with 3-methyl-2-oxobutanoate (2-ketoisovalerate) to form 3-carboxy-3-hydroxy-4-methylpentanoate (2-isopropylmalate). The polypeptide is 2-isopropylmalate synthase (Dechloromonas aromatica (strain RCB)).